Reading from the N-terminus, the 79-residue chain is Sec-independent protein translocase protein TatA (79 aa).

Residues 1–21 (MGFSTTHLLIFLVIIIVIFGT) form a helical membrane-spanning segment. The segment at 43–63 (KEGSDKAADAPAAAPQQVASS) is disordered. Over residues 51 to 63 (DAPAAAPQQVASS) the composition is skewed to low complexity.

The protein belongs to the TatA/E family. The Tat system comprises two distinct complexes: a TatABC complex, containing multiple copies of TatA, TatB and TatC subunits, and a separate TatA complex, containing only TatA subunits. Substrates initially bind to the TatABC complex, which probably triggers association of the separate TatA complex to form the active translocon.

It localises to the cell inner membrane. Functionally, part of the twin-arginine translocation (Tat) system that transports large folded proteins containing a characteristic twin-arginine motif in their signal peptide across membranes. TatA could form the protein-conducting channel of the Tat system. This is Sec-independent protein translocase protein TatA from Albidiferax ferrireducens (strain ATCC BAA-621 / DSM 15236 / T118) (Rhodoferax ferrireducens).